We begin with the raw amino-acid sequence, 553 residues long: Formate--tetrahydrofolate ligase (553 aa).

Residue 63–70 participates in ATP binding; the sequence is TPAGEGKS.

It belongs to the formate--tetrahydrofolate ligase family.

The enzyme catalyses (6S)-5,6,7,8-tetrahydrofolate + formate + ATP = (6R)-10-formyltetrahydrofolate + ADP + phosphate. Its pathway is one-carbon metabolism; tetrahydrofolate interconversion. The protein is Formate--tetrahydrofolate ligase of Limosilactobacillus fermentum (strain NBRC 3956 / LMG 18251) (Lactobacillus fermentum).